Here is a 240-residue protein sequence, read N- to C-terminus: Glycerol uptake facilitator protein 3 (240 aa).

Transmembrane regions (helical) follow at residues 11–31 and 41–61; these read LGEF…VAGV and AGWV…VYAS. The short motif at 70–72 is the NPA 1 element; sequence NPA. 3 helical membrane passes run 88 to 108, 137 to 157, and 162 to 182; these read VIPY…VVWL, FWNF…LLAF, and FTAG…GLSL. An NPA 2 motif is present at residues 191–193; it reads NPA. Residues 219 to 239 form a helical membrane-spanning segment; sequence WVPIAGPLVGGALGALLFNVL.

The protein belongs to the MIP/aquaporin (TC 1.A.8) family.

Its subcellular location is the cell membrane. In terms of biological role, transporter that facilitates the transmembrane diffusion of water, dihydroxyacetone, glycerol and H(2)O(2). Is not permeable to urea and D/L-lactic acid. The sequence is that of Glycerol uptake facilitator protein 3 from Lactiplantibacillus plantarum (strain ATCC BAA-793 / NCIMB 8826 / WCFS1) (Lactobacillus plantarum).